A 336-amino-acid chain; its full sequence is GTPase Obg (336 aa).

An Obg domain is found at M1–I159. One can recognise an OBG-type G domain in the interval A160–D327. Residues G166–S173, F191–H195, D212–G215, S279–D282, and S308–V310 each bind GTP. Mg(2+) is bound by residues S173 and T193.

The protein belongs to the TRAFAC class OBG-HflX-like GTPase superfamily. OBG GTPase family. As to quaternary structure, monomer. Mg(2+) is required as a cofactor.

Its subcellular location is the cytoplasm. An essential GTPase which binds GTP, GDP and possibly (p)ppGpp with moderate affinity, with high nucleotide exchange rates and a fairly low GTP hydrolysis rate. Plays a role in control of the cell cycle, stress response, ribosome biogenesis and in those bacteria that undergo differentiation, in morphogenesis control. The sequence is that of GTPase Obg from Sinorhizobium medicae (strain WSM419) (Ensifer medicae).